The primary structure comprises 1198 residues: Fibronectin type-III domain-containing protein 3A (1198 aa).

Residues 188–201 (KKLKDRQGTQKDKM) are compositionally biased toward basic and acidic residues. The disordered stretch occupies residues 188–257 (KKLKDRQGTQ…VDPEMEEKDE (70 aa)). Phosphoserine is present on residues Ser-203, Ser-207, and Ser-213. Fibronectin type-III domains lie at 268 to 369 (NIVK…TLSC), 373 to 465 (PPNA…TSGC), 469 to 562 (VPAS…TCPD), 566 to 660 (VPVK…TPAV), 664 to 757 (PCLP…TAPG), 761 to 851 (QCRP…TPPS), 863 to 950 (SDDD…TKPL), 951 to 1045 (PPDP…TPKS), and 1049 to 1151 (ALKA…TEPP). Lys-384 carries the post-translational modification N6-acetyllysine. Residues 1177 to 1197 (ILVVFAFFSILIAFIIQYFVI) traverse the membrane as a helical segment.

The protein belongs to the FNDC3 family. In terms of tissue distribution, testis. Localizes to the acrosome of spermatids, as well as to Leydig cells. Can be detected on the acrosome beginning at steps 2-3 and continuing until step 12 of spermiogenesis.

It is found in the golgi apparatus membrane. In terms of biological role, mediates spermatid-Sertoli adhesion during spermatogenesis. This chain is Fibronectin type-III domain-containing protein 3A (Fndc3a), found in Mus musculus (Mouse).